A 65-amino-acid polypeptide reads, in one-letter code: Large ribosomal subunit protein bL35 (65 aa).

Residues 20-42 (GKVRRHHANASHIMTTKTTKRKR) are disordered.

This sequence belongs to the bacterial ribosomal protein bL35 family.

The protein is Large ribosomal subunit protein bL35 of Syntrophus aciditrophicus (strain SB).